Reading from the N-terminus, the 166-residue chain is Urease accessory protein UreE 2 (166 aa).

The disordered stretch occupies residues 133–156 (QPEHGAYGGGHHHSRAGEEDFNYP).

It belongs to the UreE family.

It localises to the cytoplasm. In terms of biological role, involved in urease metallocenter assembly. Binds nickel. Probably functions as a nickel donor during metallocenter assembly. The chain is Urease accessory protein UreE 2 from Pseudomonas syringae pv. tomato (strain ATCC BAA-871 / DC3000).